The chain runs to 818 residues: Fibrous sheath CABYR-binding protein (818 aa).

The interval 1–61 is disordered; that stretch reads MEEKDESEQS…PKAALSIGNI (61 aa). 3 positions are modified to phosphoserine: Ser-25, Ser-57, and Ser-182. 2 disordered regions span residues 195–727 and 773–805; these read SFSK…PFIT and LESGNLDDKPKSEEPLERDTIPKDSSGTKNEGV. Low complexity-rich tracts occupy residues 490 to 511, 544 to 560, and 697 to 715; these read SPPAEEVPAGEPPEVQSPPAEE, EAPAGEPSEVQSPPAEE, and AELQPPSTEETTSEMVSVE. Residues 773–794 are compositionally biased toward basic and acidic residues; the sequence is LESGNLDDKPKSEEPLERDTIP.

Interacts with CABYR. Interacts with ROPN1 and ROPN1L; the interaction increases upon spermatozoa capacitation conditions. Phosphorylated by PKA upon spermatozoa capacitation conditions.

The protein resides in the cell projection. Its subcellular location is the cilium. It is found in the flagellum. Functionally, may be involved in the later stages of fibrous sheath biogenesis and spermatozoa capacitation. Inhibits ROPN1 and ROPN1L SUMOylation. Binds calcium. This Bos taurus (Bovine) protein is Fibrous sheath CABYR-binding protein.